Reading from the N-terminus, the 446-residue chain is N-succinylarginine dihydrolase (446 aa).

Substrate contacts are provided by residues 19–28 (AGLSYGNVAS), N110, and 137–138 (HR). E174 is a catalytic residue. Substrate is bound at residue R214. Residue H250 is part of the active site. The substrate site is built by D252 and N363. Residue C369 is the Nucleophile of the active site.

It belongs to the succinylarginine dihydrolase family. As to quaternary structure, homodimer.

It catalyses the reaction N(2)-succinyl-L-arginine + 2 H2O + 2 H(+) = N(2)-succinyl-L-ornithine + 2 NH4(+) + CO2. Its pathway is amino-acid degradation; L-arginine degradation via AST pathway; L-glutamate and succinate from L-arginine: step 2/5. Functionally, catalyzes the hydrolysis of N(2)-succinylarginine into N(2)-succinylornithine, ammonia and CO(2). This Pseudoalteromonas atlantica (strain T6c / ATCC BAA-1087) protein is N-succinylarginine dihydrolase.